The chain runs to 261 residues: Cytochrome c oxidase subunit 3 (261 aa).

At 1 to 15 (MAHQAHAYHMVDPSP) the chain is on the mitochondrial matrix side. A helical membrane pass occupies residues 16–34 (WPLTGAIAALLLTSGTAVW). The Mitochondrial intermembrane segment spans residues 35 to 40 (FHFHSL). A helical membrane pass occupies residues 41-66 (TLLTMGNILLLLTMYQWWRDIIREGT). Residues 67–72 (FQGHHT) lie on the Mitochondrial matrix side of the membrane. The chain crosses the membrane as a helical span at residues 73-105 (PPVQKGLRYGMILFITSEVFFFLGFFWAFYHSS). At 106 to 128 (LSPTPELGGCWPPTGIITLDPFE) the chain is on the mitochondrial intermembrane side. The helical transmembrane segment at 129-152 (VPLLNTAVLLASGVTVTWAHHSIM) threads the bilayer. Topologically, residues 153 to 155 (EGE) are mitochondrial matrix. A helical transmembrane segment spans residues 156–183 (RKQTIQALTLTILLGFYFTFLQGMEYYE). Residues 184 to 190 (APFTIAD) are Mitochondrial intermembrane-facing. The helical transmembrane segment at 191-223 (GVYGSTFFVATGFHGLHVIIGSTFLAICLLRQI) threads the bilayer. The Mitochondrial matrix portion of the chain corresponds to 224–232 (QYHFTSEHH). Residues 233-256 (FGFEAAAWYWHFVDVVWLFLYVSI) form a helical membrane-spanning segment. At 257 to 261 (YWWGS) the chain is on the mitochondrial intermembrane side.

It belongs to the cytochrome c oxidase subunit 3 family. In terms of assembly, component of the cytochrome c oxidase (complex IV, CIV), a multisubunit enzyme composed of 14 subunits. The complex is composed of a catalytic core of 3 subunits MT-CO1, MT-CO2 and MT-CO3, encoded in the mitochondrial DNA, and 11 supernumerary subunits COX4I, COX5A, COX5B, COX6A, COX6B, COX6C, COX7A, COX7B, COX7C, COX8 and NDUFA4, which are encoded in the nuclear genome. The complex exists as a monomer or a dimer and forms supercomplexes (SCs) in the inner mitochondrial membrane with NADH-ubiquinone oxidoreductase (complex I, CI) and ubiquinol-cytochrome c oxidoreductase (cytochrome b-c1 complex, complex III, CIII), resulting in different assemblies (supercomplex SCI(1)III(2)IV(1) and megacomplex MCI(2)III(2)IV(2)).

The protein localises to the mitochondrion inner membrane. The enzyme catalyses 4 Fe(II)-[cytochrome c] + O2 + 8 H(+)(in) = 4 Fe(III)-[cytochrome c] + 2 H2O + 4 H(+)(out). In terms of biological role, component of the cytochrome c oxidase, the last enzyme in the mitochondrial electron transport chain which drives oxidative phosphorylation. The respiratory chain contains 3 multisubunit complexes succinate dehydrogenase (complex II, CII), ubiquinol-cytochrome c oxidoreductase (cytochrome b-c1 complex, complex III, CIII) and cytochrome c oxidase (complex IV, CIV), that cooperate to transfer electrons derived from NADH and succinate to molecular oxygen, creating an electrochemical gradient over the inner membrane that drives transmembrane transport and the ATP synthase. Cytochrome c oxidase is the component of the respiratory chain that catalyzes the reduction of oxygen to water. Electrons originating from reduced cytochrome c in the intermembrane space (IMS) are transferred via the dinuclear copper A center (CU(A)) of subunit 2 and heme A of subunit 1 to the active site in subunit 1, a binuclear center (BNC) formed by heme A3 and copper B (CU(B)). The BNC reduces molecular oxygen to 2 water molecules using 4 electrons from cytochrome c in the IMS and 4 protons from the mitochondrial matrix. This is Cytochrome c oxidase subunit 3 (mt-co3) from Salmo salar (Atlantic salmon).